Here is a 143-residue protein sequence, read N- to C-terminus: Large ribosomal subunit protein uL15 (143 aa).

The interval 1 to 59 (MELNTITPGQGAKHAKRRVGRGIGSGLGKTAGRGHKGQKSRSGGYHKVGFEGGQMPMQR) is disordered. Residues 21-31 (RGIGSGLGKTA) are compositionally biased toward gly residues.

Belongs to the universal ribosomal protein uL15 family. In terms of assembly, part of the 50S ribosomal subunit.

Binds to the 23S rRNA. The polypeptide is Large ribosomal subunit protein uL15 (Polaromonas naphthalenivorans (strain CJ2)).